The primary structure comprises 336 residues: Glyceraldehyde-3-phosphate dehydrogenase (336 aa).

NAD(+) is bound by residues 12-13 (RI), aspartate 35, arginine 79, and serine 121. Residues 152–154 (SCT) and threonine 183 contribute to the D-glyceraldehyde 3-phosphate site. Cysteine 153 functions as the Nucleophile in the catalytic mechanism. Position 184 (asparagine 184) interacts with NAD(+). D-glyceraldehyde 3-phosphate-binding positions include arginine 198, 211-212 (TG), and arginine 234. Position 317 (asparagine 317) interacts with NAD(+).

This sequence belongs to the glyceraldehyde-3-phosphate dehydrogenase family. In terms of assembly, homotetramer.

Its subcellular location is the cytoplasm. It carries out the reaction D-glyceraldehyde 3-phosphate + phosphate + NAD(+) = (2R)-3-phospho-glyceroyl phosphate + NADH + H(+). It functions in the pathway carbohydrate degradation; glycolysis; pyruvate from D-glyceraldehyde 3-phosphate: step 1/5. Resistant to pentalenolactone. Functionally, catalyzes the oxidative phosphorylation of glyceraldehyde 3-phosphate (G3P) to 1,3-bisphosphoglycerate (BPG) using the cofactor NAD. The first reaction step involves the formation of a hemiacetal intermediate between G3P and a cysteine residue, and this hemiacetal intermediate is then oxidized to a thioester, with concomitant reduction of NAD to NADH. The reduced NADH is then exchanged with the second NAD, and the thioester is attacked by a nucleophilic inorganic phosphate to produce BPG. In Streptomyces coelicolor (strain ATCC BAA-471 / A3(2) / M145), this protein is Glyceraldehyde-3-phosphate dehydrogenase (gap).